A 252-amino-acid polypeptide reads, in one-letter code: Spermatogenesis-associated protein 9 (252 aa).

A helical transmembrane segment spans residues 145–167 (TSIMYASYAALIYLAVCVNAVLA). Positions 208-221 (KAKPYRSLPEKPDN) are enriched in basic and acidic residues. Positions 208-235 (KAKPYRSLPEKPDNLLDQPKPPANKQSN) are disordered.

The protein resides in the membrane. Its function is as follows. May play at role in testicular development/spermatogenesis and may be an important factor in male infertility. In Mus musculus (Mouse), this protein is Spermatogenesis-associated protein 9 (Spata9).